Reading from the N-terminus, the 445-residue chain is FAD-dependent monooxygenase sorC (445 aa).

Residues Pro8–Leu28 traverse the membrane as a helical segment. A glycan (N-linked (GlcNAc...) asparagine) is linked at Asn31. Residues Glu38 and Arg119 each contribute to the FAD site. The active site involves Arg201. FAD is bound by residues Asp323 and Ala336. An N-linked (GlcNAc...) asparagine glycan is attached at Asn358.

The protein belongs to the paxM FAD-dependent monooxygenase family. Requires FAD as cofactor.

It is found in the membrane. The protein operates within secondary metabolite biosynthesis. In terms of biological role, FAD-dependent monooxygenase; part of the gene cluster that mediates the biosynthesis of sorbicillinoids, a diverse group of yellow secondary metabolites that restrict growth of competing pathogenic fungi but not of bacteria. Sorbicillinoids biosynthesis requires the action of two PKSs. SorA iteratively combines three acetyl units and the growing chain is modified by the ketoacyl reductase subunit, and optional by the enoyl reductase subunit in the second cycle. The polyketide is then handed over to the PKS SorB, which adds three more acetyl units, and two methyl groups. SorB releases an aldehyde, which undergoes spontaneous cyclization resulting in the formation of sorbicillin or 2',3'-dihydrosorbicillin. The monooxygenase sorC oxidizes sorbicillin and 2',3'-dihydrosorbicillin to 2',3'-dihydrosorbicillinol and sorbicillinol, respectively. The oxidoreductase sorD further converts sorbicillinol into oxosorbicillinol. Sorbicillinol is the building block for the other sorbicillinoids such as disorbicillinol, bisvertinolon, and dihydrobisvertinolone. This is FAD-dependent monooxygenase sorC from Penicillium rubens (strain ATCC 28089 / DSM 1075 / NRRL 1951 / Wisconsin 54-1255) (Penicillium chrysogenum).